The following is a 567-amino-acid chain: UPF0313 protein CTN_0332 (567 aa).

The Radical SAM core domain occupies 288 to 560; sequence KAIETVKFSI…NKMKENVLFK (273 aa). [4Fe-4S] cluster is bound by residues C303, C307, and C310.

Belongs to the UPF0313 family. It depends on [4Fe-4S] cluster as a cofactor.

This chain is UPF0313 protein CTN_0332, found in Thermotoga neapolitana (strain ATCC 49049 / DSM 4359 / NBRC 107923 / NS-E).